The chain runs to 208 residues: ATP phosphoribosyltransferase (208 aa).

This sequence belongs to the ATP phosphoribosyltransferase family. Short subfamily. Heteromultimer composed of HisG and HisZ subunits.

It localises to the cytoplasm. The catalysed reaction is 1-(5-phospho-beta-D-ribosyl)-ATP + diphosphate = 5-phospho-alpha-D-ribose 1-diphosphate + ATP. It functions in the pathway amino-acid biosynthesis; L-histidine biosynthesis; L-histidine from 5-phospho-alpha-D-ribose 1-diphosphate: step 1/9. Its function is as follows. Catalyzes the condensation of ATP and 5-phosphoribose 1-diphosphate to form N'-(5'-phosphoribosyl)-ATP (PR-ATP). Has a crucial role in the pathway because the rate of histidine biosynthesis seems to be controlled primarily by regulation of HisG enzymatic activity. The sequence is that of ATP phosphoribosyltransferase from Lactococcus lactis subsp. cremoris (strain MG1363).